A 106-amino-acid chain; its full sequence is MVTVNRLVLSGTVCKTPIRKVSPSGIPHCQFVLEHRSTQEEAGLSRQAWCRMPVIVSGLSSQAVTHSITVGTQLTVHGFISCHQGRNGLSKIVLHAEQIELIDSGD.

The SSB domain occupies 4–103 (VNRLVLSGTV…LHAEQIELID (100 aa)).

The protein belongs to the PriB family. Homodimer. Interacts with PriA and DnaT. Component of the replication restart primosome. Primosome assembly occurs via a 'hand-off' mechanism. PriA binds to replication forks, subsequently PriB then DnaT bind; DnaT then displaces ssDNA to generate the helicase loading substrate.

Functionally, involved in the restart of stalled replication forks, which reloads the replicative helicase on sites other than the origin of replication; the PriA-PriB pathway is the major replication restart pathway. During primosome assembly it facilitates complex formation between PriA and DnaT on DNA; stabilizes PriA on DNA. Stimulates the DNA unwinding activity of PriA helicase. The sequence is that of Replication restart protein PriB from Pectobacterium carotovorum subsp. carotovorum (strain PC1).